A 313-amino-acid polypeptide reads, in one-letter code: Carbamate kinase 2 (313 aa).

It belongs to the carbamate kinase family.

It is found in the cytoplasm. The catalysed reaction is hydrogencarbonate + NH4(+) + ATP = carbamoyl phosphate + ADP + H2O + H(+). It participates in metabolic intermediate metabolism; carbamoyl phosphate degradation; CO(2) and NH(3) from carbamoyl phosphate: step 1/1. The polypeptide is Carbamate kinase 2 (arcC2) (Staphylococcus aureus (strain MRSA252)).